The chain runs to 564 residues: Dihydropyrimidinase-related protein 5 (564 aa).

Phosphothreonine is present on residues Thr509 and Thr514. A phosphoserine mark is found at Ser532 and Ser538. Arg559 carries the post-translational modification Omega-N-methylarginine.

Belongs to the metallo-dependent hydrolases superfamily. Hydantoinase/dihydropyrimidinase family. As to quaternary structure, homotetramer, and heterotetramer with other DPYS-like proteins. Interacts with DPYSL2, DPYSL3 and DPYSL4. Interacts with MAP2 and TUBB3.

The protein resides in the cytoplasm. In terms of biological role, involved in the negative regulation of dendrite outgrowth. In Homo sapiens (Human), this protein is Dihydropyrimidinase-related protein 5 (DPYSL5).